We begin with the raw amino-acid sequence, 360 residues long: Peptide chain release factor 1 (360 aa).

The residue at position 235 (Q235) is an N5-methylglutamine. Residues 281–310 (AERQRQDAAQAESRRLQVGSGDRSQRIRTY) form a disordered region.

It belongs to the prokaryotic/mitochondrial release factor family. Post-translationally, methylated by PrmC. Methylation increases the termination efficiency of RF1.

It is found in the cytoplasm. In terms of biological role, peptide chain release factor 1 directs the termination of translation in response to the peptide chain termination codons UAG and UAA. The chain is Peptide chain release factor 1 from Stenotrophomonas maltophilia (strain K279a).